The following is a 348-amino-acid chain: Phosphate acyltransferase (348 aa).

Belongs to the PlsX family. Homodimer. Probably interacts with PlsY.

It is found in the cytoplasm. It catalyses the reaction a fatty acyl-[ACP] + phosphate = an acyl phosphate + holo-[ACP]. The protein operates within lipid metabolism; phospholipid metabolism. Functionally, catalyzes the reversible formation of acyl-phosphate (acyl-PO(4)) from acyl-[acyl-carrier-protein] (acyl-ACP). This enzyme utilizes acyl-ACP as fatty acyl donor, but not acyl-CoA. In Pectobacterium atrosepticum (strain SCRI 1043 / ATCC BAA-672) (Erwinia carotovora subsp. atroseptica), this protein is Phosphate acyltransferase.